The following is a 142-amino-acid chain: Large ribosomal subunit protein uL13 (142 aa).

It belongs to the universal ribosomal protein uL13 family. In terms of assembly, part of the 50S ribosomal subunit.

Its function is as follows. This protein is one of the early assembly proteins of the 50S ribosomal subunit, although it is not seen to bind rRNA by itself. It is important during the early stages of 50S assembly. The chain is Large ribosomal subunit protein uL13 from Cellvibrio japonicus (strain Ueda107) (Pseudomonas fluorescens subsp. cellulosa).